The primary structure comprises 122 residues: Large ribosomal subunit protein uL14 (122 aa).

The protein belongs to the universal ribosomal protein uL14 family. In terms of assembly, part of the 50S ribosomal subunit. Forms a cluster with proteins L3 and L19. In the 70S ribosome, L14 and L19 interact and together make contacts with the 16S rRNA in bridges B5 and B8.

Binds to 23S rRNA. Forms part of two intersubunit bridges in the 70S ribosome. In Verminephrobacter eiseniae (strain EF01-2), this protein is Large ribosomal subunit protein uL14.